Reading from the N-terminus, the 405-residue chain is ATP phosphoribosyltransferase regulatory subunit (405 aa).

Belongs to the class-II aminoacyl-tRNA synthetase family. HisZ subfamily. Heteromultimer composed of HisG and HisZ subunits.

Its subcellular location is the cytoplasm. It functions in the pathway amino-acid biosynthesis; L-histidine biosynthesis; L-histidine from 5-phospho-alpha-D-ribose 1-diphosphate: step 1/9. Functionally, required for the first step of histidine biosynthesis. May allow the feedback regulation of ATP phosphoribosyltransferase activity by histidine. This chain is ATP phosphoribosyltransferase regulatory subunit, found in Microcystis aeruginosa (strain NIES-843 / IAM M-2473).